A 156-amino-acid polypeptide reads, in one-letter code: MNLNATLFAQMVVFLILAWFTMKFVWPPLINALDERSKKIADGLSAAEKGKAELEAAHKRVDQELAQARNDGQQRIADAEKRAVAVADEIKAQAQAEAARIIAQAKADAEQQVVKARETLRGEVAALAVKGAEQILKREVDQAAHADLLNQLKAEL.

Residues 7–27 (LFAQMVVFLILAWFTMKFVWP) traverse the membrane as a helical segment.

It belongs to the ATPase B chain family. In terms of assembly, F-type ATPases have 2 components, F(1) - the catalytic core - and F(0) - the membrane proton channel. F(1) has five subunits: alpha(3), beta(3), gamma(1), delta(1), epsilon(1). F(0) has three main subunits: a(1), b(2) and c(10-14). The alpha and beta chains form an alternating ring which encloses part of the gamma chain. F(1) is attached to F(0) by a central stalk formed by the gamma and epsilon chains, while a peripheral stalk is formed by the delta and b chains.

It is found in the cell inner membrane. In terms of biological role, f(1)F(0) ATP synthase produces ATP from ADP in the presence of a proton or sodium gradient. F-type ATPases consist of two structural domains, F(1) containing the extramembraneous catalytic core and F(0) containing the membrane proton channel, linked together by a central stalk and a peripheral stalk. During catalysis, ATP synthesis in the catalytic domain of F(1) is coupled via a rotary mechanism of the central stalk subunits to proton translocation. Its function is as follows. Component of the F(0) channel, it forms part of the peripheral stalk, linking F(1) to F(0). The chain is ATP synthase subunit b from Paraburkholderia phytofirmans (strain DSM 17436 / LMG 22146 / PsJN) (Burkholderia phytofirmans).